Consider the following 203-residue polypeptide: Large ribosomal subunit protein uL3 (203 aa).

It belongs to the universal ribosomal protein uL3 family. As to quaternary structure, part of the 50S ribosomal subunit. Forms a cluster with proteins L14 and L19.

Its function is as follows. One of the primary rRNA binding proteins, it binds directly near the 3'-end of the 23S rRNA, where it nucleates assembly of the 50S subunit. The chain is Large ribosomal subunit protein uL3 from Christiangramia forsetii (strain DSM 17595 / CGMCC 1.15422 / KT0803) (Gramella forsetii).